Here is an 889-residue protein sequence, read N- to C-terminus: Extended synaptotagmin-3 (889 aa).

The interval 1-65 (MAQGDPGGQT…GPRDPGQGGA (65 aa)) is disordered. Over 1 to 66 (MAQGDPGGQT…PRDPGQGGAG (66 aa)) the chain is Cytoplasmic. Basic and acidic residues-rich tracts occupy residues 17-28 (TDKKPDEPKATE) and 41-58 (PGGE…KGPR). 2 helical membrane passes run 67-91 (EALA…FPVY) and 92-112 (LCGR…LWMF). At 113–889 (WTRNKKFKLA…ELTPTGLPTS (777 aa)) the chain is on the cytoplasmic side. Residues 155–333 (DVERVEWLNK…LPNRFTVPLS (179 aa)) enclose the SMP-LTD domain. 2 C2 domains span residues 331-452 (PLSS…DEWF) and 468-618 (WLSL…STIK). Ca(2+)-binding residues include K363, D364, D376, D423, E424, D425, D427, D429, and D430. Residues 649-724 (SIKRAQSQQH…GAVPESHTPS (76 aa)) form a disordered region. A compositionally biased stretch (basic residues) spans 658–671 (HKSHGKSHQAHHQA). Low complexity-rich tracts occupy residues 672 to 682 (HQTQQNHTVQQ) and 691 to 714 (ISTT…PNST). The region spanning 757–879 (MTGEVEVSVR…DLVKGFTKWF (123 aa)) is the C2 3 domain. Positions 804 to 811 (RKWSGRKK) are required for phosphatidylinositol 4,5-bisphosphate-dependent location at the cell membrane.

The protein belongs to the extended synaptotagmin family.

Its subcellular location is the cell membrane. The protein resides in the endoplasmic reticulum membrane. Tethers the endoplasmic reticulum to the cell membrane and promotes the formation of appositions between the endoplasmic reticulum and the cell membrane. Binds glycerophospholipids in a barrel-like domain and may play a role in cellular lipid transport. The chain is Extended synaptotagmin-3 (esyt3) from Xenopus tropicalis (Western clawed frog).